Reading from the N-terminus, the 269-residue chain is Meiotically up-regulated gene 43 protein (269 aa).

It is found in the mitochondrion. In terms of biological role, has a role in meiosis. The protein is Meiotically up-regulated gene 43 protein (mug43) of Schizosaccharomyces pombe (strain 972 / ATCC 24843) (Fission yeast).